Here is a 201-residue protein sequence, read N- to C-terminus: Cell division protein SepF (201 aa).

Positions 27-38 (VQERTSVQRDSR) are enriched in basic and acidic residues. Residues 27–99 (VQERTSVQRD…PRIQNKDSVR (73 aa)) form a disordered region. Composition is skewed to polar residues over residues 43–54 (QEASQRSHMTNS) and 82–92 (DNSYQQATPRI).

The protein belongs to the SepF family. As to quaternary structure, homodimer. Interacts with FtsZ.

Its subcellular location is the cytoplasm. Cell division protein that is part of the divisome complex and is recruited early to the Z-ring. Probably stimulates Z-ring formation, perhaps through the cross-linking of FtsZ protofilaments. Its function overlaps with FtsA. This chain is Cell division protein SepF, found in Streptococcus agalactiae serotype III (strain NEM316).